The sequence spans 840 residues: Phosphatidylinositol-glycan-specific phospholipase D (840 aa).

An N-terminal signal peptide occupies residues 1–23; it reads MSAFRLWPGLLIMLGSLCHRGSP. N-linked (GlcNAc...) asparagine glycans are attached at residues Asn-94, Asn-271, Asn-292, Asn-307, and Asn-321. FG-GAP repeat units follow at residues 367–428, 436–497, 499–559, 563–623, 633–693, 704–770, and 788–840; these read SPLA…GLPP, EAHR…GGMS, SPNI…LSDK, NVEA…SLGR, QSWF…GATR, LLLS…TLGD, and QYVL…LGSD. N-linked (GlcNAc...) asparagine glycans are attached at residues Asn-501, Asn-568, Asn-591, Asn-604, and Asn-659.

It belongs to the GPLD1 family. Monomer.

The protein resides in the secreted. It catalyses the reaction a 6-(alpha-D-glucosaminyl)-1-(1,2-diacyl-sn-glycero-3-phospho)-1D-myo-inositol + H2O = 6-(alpha-D-glucosaminyl)-1D-myo-inositol + a 1,2-diacyl-sn-glycero-3-phosphate + H(+). Its function is as follows. This protein hydrolyzes the inositol phosphate linkage in proteins anchored by phosphatidylinositol glycans (GPI-anchor) thus releasing these proteins from the membrane. In Homo sapiens (Human), this protein is Phosphatidylinositol-glycan-specific phospholipase D (GPLD1).